The primary structure comprises 842 residues: Protein P (842 aa).

The interval 1 to 177 (MPLSYQHFRR…FCGSPYSWEQ (177 aa)) is terminal protein domain (TP). The interval 178–345 (ELHHGAFLDG…YCLTHLVNLL (168 aa)) is spacer. The interval 186–273 (DGPSRMGEES…AKNIASRSAS (88 aa)) is disordered. Positions 223 to 239 (GPQSQQRPLDGSQQGRS) are enriched in polar residues. The tract at residues 346-689 (EDWGPCTEHG…YLNLYPVARQ (344 aa)) is polymerase/reverse transcriptase domain (RT). The region spanning 356 to 599 (KHHIRIPRTP…YSLNFMGYVI (244 aa)) is the Reverse transcriptase domain. Residues Asp-428, Asp-550, and Asp-551 each coordinate Mg(2+).

It belongs to the hepadnaviridae P protein family.

The catalysed reaction is DNA(n) + a 2'-deoxyribonucleoside 5'-triphosphate = DNA(n+1) + diphosphate. The enzyme catalyses Endonucleolytic cleavage to 5'-phosphomonoester.. With respect to regulation, activated by host HSP70 and HSP40 in vitro to be able to bind the epsilon loop of the pgRNA. Because deletion of the RNase H region renders the protein partly chaperone-independent, the chaperones may be needed indirectly to relieve occlusion of the RNA-binding site by this domain. Inhibited by several reverse-transcriptase inhibitors: Lamivudine, Adefovir and Entecavir. In terms of biological role, multifunctional enzyme that converts the viral RNA genome into dsDNA in viral cytoplasmic capsids. This enzyme displays a DNA polymerase activity that can copy either DNA or RNA templates, and a ribonuclease H (RNase H) activity that cleaves the RNA strand of RNA-DNA heteroduplexes in a partially processive 3'- to 5'-endonucleasic mode. Neo-synthesized pregenomic RNA (pgRNA) are encapsidated together with the P protein, and reverse-transcribed inside the nucleocapsid. Initiation of reverse-transcription occurs first by binding the epsilon loop on the pgRNA genome, and is initiated by protein priming, thereby the 5'-end of (-)DNA is covalently linked to P protein. Partial (+)DNA is synthesized from the (-)DNA template and generates the relaxed circular DNA (RC-DNA) genome. After budding and infection, the RC-DNA migrates in the nucleus, and is converted into a plasmid-like covalently closed circular DNA (cccDNA). The activity of P protein does not seem to be necessary for cccDNA generation, and is presumably released from (+)DNA by host nuclear DNA repair machinery. The polypeptide is Protein P (Homo sapiens (Human)).